Here is a 361-residue protein sequence, read N- to C-terminus: Probable sugar phosphate/phosphate translocator At1g12500 (361 aa).

Valine 2 is subject to N-acetylvaline. A run of 9 helical transmembrane segments spans residues 56–76, 90–110, 125–145, 153–173, 192–212, 240–260, 276–296, 306–326, and 329–349; these read TILT…VLLL, IFLT…VINI, FLKI…GNTS, FNQA…FLIT, IVLA…ICVA, LLLY…LYIE, LIIF…LTNF, TLQV…VLIF, and PVTV…VLYS. Residues 89 to 196 form the EamA domain; the sequence is PIFLTMTHML…PVVSGIVLAS (108 aa).

This sequence belongs to the TPT transporter family. TPT (TC 2.A.7.9) subfamily.

The protein resides in the membrane. The protein is Probable sugar phosphate/phosphate translocator At1g12500 of Arabidopsis thaliana (Mouse-ear cress).